We begin with the raw amino-acid sequence, 31 residues long: Photosystem II reaction center protein T (31 aa).

A helical transmembrane segment spans residues 3-23; it reads SFAYVLILTFAIATLFFAIAF.

The protein belongs to the PsbT family. In terms of assembly, PSII is composed of 1 copy each of membrane proteins PsbA, PsbB, PsbC, PsbD, PsbE, PsbF, PsbH, PsbI, PsbJ, PsbK, PsbL, PsbM, PsbT, PsbX, PsbY, PsbZ, Psb30/Ycf12, peripheral proteins PsbO, CyanoQ (PsbQ), PsbU, PsbV and a large number of cofactors. It forms dimeric complexes.

It localises to the cellular thylakoid membrane. Functionally, found at the monomer-monomer interface of the photosystem II (PS II) dimer, plays a role in assembly and dimerization of PSII. PSII is a light-driven water plastoquinone oxidoreductase, using light energy to abstract electrons from H(2)O, generating a proton gradient subsequently used for ATP formation. This chain is Photosystem II reaction center protein T, found in Synechococcus sp. (strain CC9902).